The following is a 1052-amino-acid chain: Germline survival defective-1 (1052 aa).

The first 25 residues, 1–25 (MRCLISYLFHSFLIFLKFIRSDVTA), serve as a signal peptide directing secretion. Disordered stretches follow at residues 41–320 (LMKS…DPKN), 478–543 (VNGI…QSVP), 667–689 (PSSQAVGDENDTDSDHESEEEFE), 933–965 (KQTLLSKKGDHRTRSDGEGSQQNGGTSSSNSYA), and 1033–1052 (SNNTGGVNGNSGGGNQNSNF). Residues 67-145 (ATATAAATTQ…SSTSSTSQQT (79 aa)) show a composition bias toward low complexity. Over residues 163-172 (TSNTANSQSG) the composition is skewed to polar residues. The segment covering 178–190 (TNKDRPKEKEKNT) has biased composition (basic and acidic residues). Over residues 244-279 (NAKSSGFLSNSSLSSAGQISASSAPPVSTTPTAIPI) the composition is skewed to low complexity. The segment covering 305–320 (KRDEEPMPYKSTDPKN) has biased composition (basic and acidic residues). The segment at 424–732 (QHPPGLPPLL…QIEKNDNLFS (309 aa)) is gld-4 binding. A compositionally biased stretch (polar residues) spans 480–514 (GISNNIPSDRQQLDSKPNTARGSSGNINQSNTTSP). Residues 674 to 689 (DENDTDSDHESEEEFE) are compositionally biased toward acidic residues. Positions 892 to 1052 (PIELPVNMQP…SGGGNQNSNF (161 aa)) are gld-3 binding. Residues 950 to 963 (EGSQQNGGTSSSNS) show a composition bias toward low complexity. Residues 1038 to 1052 (GVNGNSGGGNQNSNF) are compositionally biased toward gly residues.

Isoform C interacts (via C-terminus) with gld-3 isoform A (via C-terminus) in an RNA-independent manner. Isoform C interacts with gld-4. Expressed in the germline (at protein level). In the early embryo is expressed in all cells, then becomes gradually restricted to the germ cell lineage and enriches in P granules (at protein level). In adult hermaphrodites, is expressed in the mitotic region, accumulates during early stages of meiotic prophase I and is slightly less abundant in maturing oocytes (at protein level).

It localises to the cytoplasm. The protein localises to the cytoplasmic granule. In terms of biological role, required maternally for germline survival by forming a maternal complex with gld-3. During hermaphrodite development forms a complex with gld-3 which promotes the sperm/oocyte switch freeing the translational repressor fbf to turn off sperm promoting factors. Required for proper oocyte differentiation and oogenic meiotic arrest. Stimulates the enzymatic activity of gld-4 and together they prevent gld-1 mRNA degradation. This chain is Germline survival defective-1, found in Caenorhabditis elegans.